Consider the following 209-residue polypeptide: Large ribosomal subunit protein uL3 (209 aa).

Positions 133–152 (THGNSLSHRVPGSIGQNQTP) are disordered. The residue at position 150 (Gln-150) is an N5-methylglutamine.

The protein belongs to the universal ribosomal protein uL3 family. As to quaternary structure, part of the 50S ribosomal subunit. Forms a cluster with proteins L14 and L19. In terms of processing, methylated by PrmB.

Functionally, one of the primary rRNA binding proteins, it binds directly near the 3'-end of the 23S rRNA, where it nucleates assembly of the 50S subunit. The chain is Large ribosomal subunit protein uL3 from Yersinia enterocolitica serotype O:8 / biotype 1B (strain NCTC 13174 / 8081).